The sequence spans 482 residues: MDDEDMSCTSGDDYAGYGDEDYYNEADVDAADDVAVTPTHSEEADYECLSVNQVERVFIDGVNSLVSRISINEKFARILLQANHWDVDKIARLVRNDRNDFLRKCHIDAKPEPKRKLSSTQSVLAKGYCSVCAMDGYTELPHLTCGHCFCEHCWKSHVESRLSEGVASRIECMESECEVYAPSEFVLSIIKNSPVIKLKYERFLLRDMVNSHPHLKFCVGNECPVIIRSTEVKPKRVTCMQCHTSFCVKCGADYHAPTSCETIKQWMTKCADDSETANYISAHTKDCPQCHSCIEKAGGCNHIQCTRCRHHFCWMCFGDWKSHGSEYYECSRYKENPSVAAEANHVKARRALEKYLHYFERFENHSKSLKMEEELRDKIRKKIDDKVNEHNGTWIDWQYLHKSVSLLTKCRYTLQYTYPFAYFLSATPRKNLFEYQQAQLEKEVEELAWAVERADGTARGALEAHMHRAEHKRQTLLHDFFF.

Residues 125-334 (AKGYCSVCAM…SEYYECSRYK (210 aa)) are TRIAD supradomain. The Zn(2+) site is built by Cys129, Cys132, Cys145, His147, Cys150, Cys153, Cys172, Cys177, Cys218, Cys223, Cys239, Cys242, Cys247, Cys250, His255, Cys260, Cys287, and Cys290. The RING-type 1 zinc finger occupies 129–177 (CSVCAMDGYTELPHLTCGHCFCEHCWKSHVESRLSEGVASRIECMESEC). Residues 198 to 260 (LKYERFLLRD…GADYHAPTSC (63 aa)) form an IBR-type zinc finger. Residues 287 to 316 (CPQCHSCIEKAGGCNHIQCTRCRHHFCWMC) form an RING-type 2; atypical zinc finger. Cys300 is an active-site residue. Cys305, Cys308, Cys313, Cys316, His323, and Cys330 together coordinate Zn(2+). Residues 433-459 (FEYQQAQLEKEVEELAWAVERADGTAR) are a coiled coil.

Belongs to the RBR family. Ariadne subfamily.

The protein localises to the nucleus. The catalysed reaction is [E2 ubiquitin-conjugating enzyme]-S-ubiquitinyl-L-cysteine + [acceptor protein]-L-lysine = [E2 ubiquitin-conjugating enzyme]-L-cysteine + [acceptor protein]-N(6)-ubiquitinyl-L-lysine.. Its function is as follows. Might act as an E3 ubiquitin-protein ligase, or as part of E3 complex, which accepts ubiquitin from specific E2 ubiquitin-conjugating enzymes, such as UBC-2/UBE2L3, and then transfers it to substrates. The polypeptide is Potential E3 ubiquitin-protein ligase ariadne-2 (Caenorhabditis elegans).